Reading from the N-terminus, the 1010-residue chain is 2-oxoglutarate dehydrogenase-like, mitochondrial (1010 aa).

The N-terminal 73 residues, M1–F73, are a transit peptide targeting the mitochondrion. The Ca(2+) site is built by H130, D143, and D145. Thiamine diphosphate contacts are provided by R299, D398, N431, I433, and Q663. D398, N431, and I433 together coordinate Mg(2+).

The protein belongs to the alpha-ketoglutarate dehydrogenase family. In terms of assembly, the OGDHC complex comprises multiple copies of three catalytic enzyme components, the 2-oxoglutarate dehydrogenase (OGDH/E1), the dihydrolipoamide dehydrogenase (DLST/E2) and the dihydrolipoamide dehydrogenase (DLD/E3). OGDHL/E1-like isoenzyme may replace OGDH in the OGDHC complex in the brain. The presence of either ODGH/E1 or ODGHL/E1-like isoenzyme in the complex may depend on its tissular distribution. Requires thiamine diphosphate as cofactor. The cofactor is Mg(2+).

It is found in the mitochondrion matrix. It catalyses the reaction N(6)-[(R)-lipoyl]-L-lysyl-[protein] + 2-oxoglutarate + H(+) = N(6)-[(R)-S(8)-succinyldihydrolipoyl]-L-lysyl-[protein] + CO2. 2-oxoglutarate dehydrogenase (E1-like) component of the 2-oxoglutarate dehydrogenase multienzyme complex (OGDHC) which mediates the decarboxylation of alpha-ketoglutarate in the tricarboxylic acid cycle. The OGDHC complex catalyzes the overall conversion of 2-oxoglutarate to succinyl-CoA and CO(2) while reducing NAD(+) to NADH. The OGDHC complex is mainly active in the mitochondrion. Involved in the inhibition of cell proliferation and in apoptosis. This is 2-oxoglutarate dehydrogenase-like, mitochondrial (OGDHL) from Pongo abelii (Sumatran orangutan).